Here is a 70-residue protein sequence, read N- to C-terminus: MTSETEKRIIALEETIAHQAKTIEELSDQLAEQWKVVEQTRAKLDRLTERFLSLEEQSLDAPAITRPPHY.

The protein belongs to the SlyX family.

The polypeptide is Protein SlyX homolog (Agrobacterium fabrum (strain C58 / ATCC 33970) (Agrobacterium tumefaciens (strain C58))).